A 695-amino-acid chain; its full sequence is DNA ligase (695 aa).

Residues 44 to 48 (DAEYD), 93 to 94 (SL), and E124 each bind NAD(+). The active-site N6-AMP-lysine intermediate is the K126. Residues R147, E187, K304, and K328 each coordinate NAD(+). Residues C422, C425, C440, and C445 each contribute to the Zn(2+) site. One can recognise a BRCT domain in the interval 606 to 695 (TVQGPLAGKT…GIEVEAAARS (90 aa)).

It belongs to the NAD-dependent DNA ligase family. LigA subfamily. Mg(2+) is required as a cofactor. Requires Mn(2+) as cofactor.

The catalysed reaction is NAD(+) + (deoxyribonucleotide)n-3'-hydroxyl + 5'-phospho-(deoxyribonucleotide)m = (deoxyribonucleotide)n+m + AMP + beta-nicotinamide D-nucleotide.. Functionally, DNA ligase that catalyzes the formation of phosphodiester linkages between 5'-phosphoryl and 3'-hydroxyl groups in double-stranded DNA using NAD as a coenzyme and as the energy source for the reaction. It is essential for DNA replication and repair of damaged DNA. This Thermomicrobium roseum (strain ATCC 27502 / DSM 5159 / P-2) protein is DNA ligase.